Consider the following 189-residue polypeptide: Protein GrpE (189 aa).

The interval 1–24 (MADEQTVDTQNPEANQAPEASGDD) is disordered.

The protein belongs to the GrpE family. Homodimer.

It is found in the cytoplasm. Functionally, participates actively in the response to hyperosmotic and heat shock by preventing the aggregation of stress-denatured proteins, in association with DnaK and GrpE. It is the nucleotide exchange factor for DnaK and may function as a thermosensor. Unfolded proteins bind initially to DnaJ; upon interaction with the DnaJ-bound protein, DnaK hydrolyzes its bound ATP, resulting in the formation of a stable complex. GrpE releases ADP from DnaK; ATP binding to DnaK triggers the release of the substrate protein, thus completing the reaction cycle. Several rounds of ATP-dependent interactions between DnaJ, DnaK and GrpE are required for fully efficient folding. This is Protein GrpE from Pseudomonas fluorescens (strain Pf0-1).